The chain runs to 224 residues: Serum amyloid P-component (224 aa).

The N-terminal stretch at methionine 1–cysteine 20 is a signal peptide. The 200-residue stretch at lysine 25–aspartate 224 folds into the Pentraxin (PTX) domain. Asparagine 52 is a glycosylation site (N-linked (GlcNAc...) asparagine). Cysteine 56 and cysteine 115 are joined by a disulfide. Ca(2+) contacts are provided by aspartate 78, asparagine 79, glutamate 156, glutamine 157, aspartate 158, and glutamine 168.

Belongs to the pentraxin family. In terms of assembly, homopentamer. Pentraxin (or pentaxin) have a discoid arrangement of 5 non-covalently bound subunits. Ca(2+) serves as cofactor.

The protein resides in the secreted. The sequence is that of Serum amyloid P-component (Apcs) from Mus musculus (Mouse).